The following is a 156-amino-acid chain: Neuroactive polyprotein R15 (156 aa).

The N-terminal stretch at 1–26 (MDSAGLHINFRLSHVLTVVTCILYIL) is a signal peptide. Positions 27 to 48 (PPTTTAYSLPAPGKAAFQHQLS) are excised as a propeptide. Cys-74 and Cys-81 form a disulfide bridge. At Gln-120 the chain carries Pyrrolidone carboxylic acid.

In terms of tissue distribution, expressed within the abdominal ganglion in neurons R15, RB(HE), the two L9(G) gill motoneurons, and L40 interneuron, all are parts of autonomic control circuit that contributes to implementing a central command to coordinate autonomic activity with escape locomotion.

The protein localises to the secreted. Functionally, the alpha-1 peptide acts as an osmoregulatory peptide, increasing blood volume, and also modulates the activity of a set of cardiac motor neurons that control heart rate. The sequence is that of Neuroactive polyprotein R15 from Aplysia californica (California sea hare).